A 234-amino-acid polypeptide reads, in one-letter code: Small ribosomal subunit protein uS3 (234 aa).

In terms of domain architecture, KH type-2 spans 39 to 107; it reads VRDYLKKKLS…PVHVNIEEVR (69 aa). The disordered stretch occupies residues 212 to 234; it reads EQPAAAEQEKRGKKSGVKHAAAS.

It belongs to the universal ribosomal protein uS3 family. Part of the 30S ribosomal subunit. Forms a tight complex with proteins S10 and S14.

Binds the lower part of the 30S subunit head. Binds mRNA in the 70S ribosome, positioning it for translation. The sequence is that of Small ribosomal subunit protein uS3 from Thiobacillus denitrificans (strain ATCC 25259 / T1).